A 1031-amino-acid chain; its full sequence is Translation initiation factor IF-2 (1031 aa).

2 disordered regions span residues 33 to 369 (KSHS…GDVL) and 388 to 436 (LKPL…AESL). Over residues 45 to 56 (ELVRSKLSEPRV) the composition is skewed to basic and acidic residues. Residues 96–105 (PAPAQQQAAA) show a composition bias toward low complexity. Residues 108–123 (ASSSKPSPQRPDQLSS) show a composition bias toward polar residues. Low complexity predominate over residues 148-171 (PAAQEPQPAAASTRPEAAAKAGSP). Residues 184–200 (VLPPPRRAASGPEPPQR) are compositionally biased toward pro residues. A compositionally biased stretch (basic and acidic residues) spans 250-281 (TRPEPRSPVAKKEESSDSGKADEAPRPQRRLE). Over residues 286 to 299 (PTRPVAKPLPPEPD) the composition is skewed to pro residues. The segment covering 419–435 (RPSASAEATAPEAAAES) has biased composition (low complexity). The tr-type G domain maps to 522–695 (PRPPVVTIMG…LLVADVAELQ (174 aa)). The tract at residues 531–538 (GHVDHGKT) is G1. 531–538 (GHVDHGKT) provides a ligand contact to GTP. A G2 region spans residues 556 to 560 (GITQR). A G3 region spans residues 581–584 (DTPG). GTP is bound by residues 581 to 585 (DTPGH) and 635 to 638 (NKID). Residues 635–638 (NKID) form a G4 region. Residues 671 to 673 (SAL) are G5.

This sequence belongs to the TRAFAC class translation factor GTPase superfamily. Classic translation factor GTPase family. IF-2 subfamily.

The protein resides in the cytoplasm. In terms of biological role, one of the essential components for the initiation of protein synthesis. Protects formylmethionyl-tRNA from spontaneous hydrolysis and promotes its binding to the 30S ribosomal subunits. Also involved in the hydrolysis of GTP during the formation of the 70S ribosomal complex. In Synechococcus sp. (strain JA-3-3Ab) (Cyanobacteria bacterium Yellowstone A-Prime), this protein is Translation initiation factor IF-2.